A 158-amino-acid chain; its full sequence is Endoribonuclease YbeY (158 aa).

Zn(2+) is bound by residues His119, His123, and His129.

It belongs to the endoribonuclease YbeY family. Zn(2+) is required as a cofactor.

The protein localises to the cytoplasm. Single strand-specific metallo-endoribonuclease involved in late-stage 70S ribosome quality control and in maturation of the 3' terminus of the 16S rRNA. This is Endoribonuclease YbeY from Acinetobacter baumannii (strain ACICU).